The chain runs to 389 residues: MLLALAQWLQNDYSFLRVVNYLTFRAVMANLTALVIGLAAGPWVIRKLTELKVGQAVRTIGPQTHLVKSGTPTMGGVLVLVSIAISTVLWCDWGNRFIWVVMLVTLGYGAIGWVDDYRKVVYRDPRGMSSREKFFWQTLIGLVAAVYLAFSVSESSNVRVWDLFLSWVEGGLSLDMPYKSNLIVPFFKEVSYPLGVAGFIVLTYLVIVGSSNAVNLTDGLDGLVIMPVVLVGGALGAFAYVMGSSVYSKYLLFPHIPGAGELLIFCSAMAGAGLAFLWFNAHPAQVFMGDVGALALGGALGTVAVIVRQEIVLFVMGGIFVVETVSVMLQVTWFKITKRRYGEGRRLFRMAPLHHHFELSGWKETQVTVRFWIVTMLLVLIGLSTLKLR.

10 helical membrane passes run 25 to 45 (RAVMANLTALVIGLAAGPWVI), 74 to 94 (MGGVLVLVSIAISTVLWCDWG), 97 to 117 (FIWVVMLVTLGYGAIGWVDDY), 134 to 154 (FFWQTLIGLVAAVYLAFSVSE), 190 to 210 (VSYPLGVAGFIVLTYLVIVGS), 222 to 242 (GLVIMPVVLVGGALGAFAYVM), 259 to 279 (AGELLIFCSAMAGAGLAFLWF), 286 to 306 (VFMGDVGALALGGALGTVAVI), 311 to 331 (IVLFVMGGIFVVETVSVMLQV), and 366 to 386 (QVTVRFWIVTMLLVLIGLSTL).

Belongs to the glycosyltransferase 4 family. MraY subfamily. It depends on Mg(2+) as a cofactor.

The protein resides in the cell inner membrane. It catalyses the reaction UDP-N-acetyl-alpha-D-muramoyl-L-alanyl-gamma-D-glutamyl-meso-2,6-diaminopimeloyl-D-alanyl-D-alanine + di-trans,octa-cis-undecaprenyl phosphate = di-trans,octa-cis-undecaprenyl diphospho-N-acetyl-alpha-D-muramoyl-L-alanyl-D-glutamyl-meso-2,6-diaminopimeloyl-D-alanyl-D-alanine + UMP. It participates in cell wall biogenesis; peptidoglycan biosynthesis. Its function is as follows. Catalyzes the initial step of the lipid cycle reactions in the biosynthesis of the cell wall peptidoglycan: transfers peptidoglycan precursor phospho-MurNAc-pentapeptide from UDP-MurNAc-pentapeptide onto the lipid carrier undecaprenyl phosphate, yielding undecaprenyl-pyrophosphoryl-MurNAc-pentapeptide, known as lipid I. In Cupriavidus pinatubonensis (strain JMP 134 / LMG 1197) (Cupriavidus necator (strain JMP 134)), this protein is Phospho-N-acetylmuramoyl-pentapeptide-transferase.